Consider the following 432-residue polypeptide: Glutamate-1-semialdehyde 2,1-aminomutase (432 aa).

Residue K269 is modified to N6-(pyridoxal phosphate)lysine.

Belongs to the class-III pyridoxal-phosphate-dependent aminotransferase family. HemL subfamily. In terms of assembly, homodimer. The cofactor is pyridoxal 5'-phosphate.

It is found in the cytoplasm. The catalysed reaction is (S)-4-amino-5-oxopentanoate = 5-aminolevulinate. The protein operates within porphyrin-containing compound metabolism; protoporphyrin-IX biosynthesis; 5-aminolevulinate from L-glutamyl-tRNA(Glu): step 2/2. This Desulforamulus reducens (strain ATCC BAA-1160 / DSM 100696 / MI-1) (Desulfotomaculum reducens) protein is Glutamate-1-semialdehyde 2,1-aminomutase.